Reading from the N-terminus, the 134-residue chain is Putative nickel-responsive regulator (134 aa).

Residues His-78, His-89, His-91, and Cys-97 each contribute to the Ni(2+) site.

Belongs to the transcriptional regulatory CopG/NikR family. Ni(2+) is required as a cofactor.

Transcriptional regulator. This Chlorobium limicola (strain DSM 245 / NBRC 103803 / 6330) protein is Putative nickel-responsive regulator.